The following is a 201-amino-acid chain: Acyl-homoserine-lactone synthase (201 aa).

It belongs to the autoinducer synthase family.

It catalyses the reaction a fatty acyl-[ACP] + S-adenosyl-L-methionine = an N-acyl-L-homoserine lactone + S-methyl-5'-thioadenosine + holo-[ACP] + H(+). Its function is as follows. Required for the synthesis of BHL (N-butanoyl-L-homoserine lactone), and HHL (N-hexanoyl-L-homoserine lactone) autoinducer molecules which bind to RhlR and thus acts in elastase biosynthesis regulation. The chain is Acyl-homoserine-lactone synthase (rhlI) from Pseudomonas aeruginosa (strain ATCC 15692 / DSM 22644 / CIP 104116 / JCM 14847 / LMG 12228 / 1C / PRS 101 / PAO1).